The chain runs to 178 residues: Mediator of RNA polymerase II transcription subunit 30 (178 aa).

A disordered region spans residues 1-22; sequence MSTPPLAPTGMASGPFGGPQAQ. An N-acetylserine modification is found at S2. Residues 134 to 173 are a coiled coil; the sequence is FASEERREIVEVNKKLKQKNQQLKQIMDQLRNLIWDINAM.

Belongs to the Mediator complex subunit 30 family. In terms of assembly, component of the Mediator complex, which is composed of MED1, MED4, MED6, MED7, MED8, MED9, MED10, MED11, MED12, MED13, MED13L, MED14, MED15, MED16, MED17, MED18, MED19, MED20, MED21, MED22, MED23, MED24, MED25, MED26, MED27, MED29, MED30, MED31, CCNC, CDK8 and CDC2L6/CDK11. The MED12, MED13, CCNC and CDK8 subunits form a distinct module termed the CDK8 module. Mediator containing the CDK8 module is less active than Mediator lacking this module in supporting transcriptional activation. Individual preparations of the Mediator complex lacking one or more distinct subunits have been variously termed ARC, CRSP, DRIP, PC2, SMCC and TRAP.

The protein resides in the nucleus. In terms of biological role, component of the Mediator complex, a coactivator involved in the regulated transcription of nearly all RNA polymerase II-dependent genes. Mediator functions as a bridge to convey information from gene-specific regulatory proteins to the basal RNA polymerase II transcription machinery. Mediator is recruited to promoters by direct interactions with regulatory proteins and serves as a scaffold for the assembly of a functional preinitiation complex with RNA polymerase II and the general transcription factors. The polypeptide is Mediator of RNA polymerase II transcription subunit 30 (Med30) (Mus musculus (Mouse)).